Reading from the N-terminus, the 205-residue chain is Snake venom metalloproteinase BmooMPalpha-I (205 aa).

A Peptidase M12B domain is found at Arg8 to Pro204. Residues Glu11 and Asp95 each coordinate Ca(2+). Intrachain disulfides connect Cys119–Cys199, Cys159–Cys183, and Cys161–Cys166. His144 lines the Zn(2+) pocket. Glu145 is a catalytic residue. 2 residues coordinate Zn(2+): His148 and His154. 2 residues coordinate Ca(2+): Cys199 and Asn202.

The protein belongs to the venom metalloproteinase (M12B) family. P-I subfamily. As to quaternary structure, monomer. Zn(2+) serves as cofactor. As to expression, expressed by the venom gland.

It is found in the secreted. Its activity is regulated as follows. Inhibited by EDTA. Not inhibited by the serine proteinase inhibitors aprotinin and benzamidine. Its function is as follows. Snake venom zinc metalloproteinase that cleaves the alpha chain of fibrinogen (FGA) first followed by the beta chain (FGB) and shows no effect on the gamma chain. Cleaves only the beta chain of fibrin, leaving the gamma-dimer untouched. Shows proteolytic activity towards azocasein. Causes defibrinogenation when intraperitoneally administered on mice. This is Snake venom metalloproteinase BmooMPalpha-I from Bothrops moojeni (Lance-headed viper).